The primary structure comprises 777 residues: Penicillin-binding protein 1B (777 aa).

Residues 1-30 (MTRKSSNRSRGRKARSGKSASSSKLQIWLG) lie on the Cytoplasmic side of the membrane. The chain crosses the membrane as a helical; Signal-anchor for type II membrane protein span at residues 31 to 52 (RIWSIGWKLALTLAAVLVFIGI). Topologically, residues 53–777 (YLDSMIKQRF…TEWIKKLFEW (725 aa)) are periplasmic. The interval 162–334 (LRLEPKLMGM…SYYNPMRYAE (173 aa)) is transglycosylase. The Proton donor; for transglycosylase activity role is filled by Glu200. Residues 415–709 (SKLEQAIHDQ…ASGALRVYAQ (295 aa)) form a transpeptidase region. The active-site Acyl-ester intermediate; for transpeptidase activity is Ser476.

It in the N-terminal section; belongs to the glycosyltransferase 51 family. The protein in the C-terminal section; belongs to the transpeptidase family.

It localises to the cell inner membrane. It catalyses the reaction [GlcNAc-(1-&gt;4)-Mur2Ac(oyl-L-Ala-gamma-D-Glu-L-Lys-D-Ala-D-Ala)](n)-di-trans,octa-cis-undecaprenyl diphosphate + beta-D-GlcNAc-(1-&gt;4)-Mur2Ac(oyl-L-Ala-gamma-D-Glu-L-Lys-D-Ala-D-Ala)-di-trans,octa-cis-undecaprenyl diphosphate = [GlcNAc-(1-&gt;4)-Mur2Ac(oyl-L-Ala-gamma-D-Glu-L-Lys-D-Ala-D-Ala)](n+1)-di-trans,octa-cis-undecaprenyl diphosphate + di-trans,octa-cis-undecaprenyl diphosphate + H(+). The catalysed reaction is Preferential cleavage: (Ac)2-L-Lys-D-Ala-|-D-Ala. Also transpeptidation of peptidyl-alanyl moieties that are N-acyl substituents of D-alanine.. Its pathway is cell wall biogenesis; peptidoglycan biosynthesis. In terms of biological role, cell wall formation. Synthesis of cross-linked peptidoglycan from the lipid intermediates. The enzyme has a penicillin-insensitive transglycosylase N-terminal domain (formation of linear glycan strands) and a penicillin-sensitive transpeptidase C-terminal domain (cross-linking of the peptide subunits). This chain is Penicillin-binding protein 1B (mrcB), found in Vibrio cholerae serotype O1 (strain ATCC 39315 / El Tor Inaba N16961).